The following is a 710-amino-acid chain: MSSIRKKDVERFILSDDYKPMVLKELYKKFRAKTREQRKKVREVVKKLEKEGRIFRDSRGRYRKLGEDLKVGTIEFTRSGYVAFVITDDFEEIAVPVEDTKYAMHKDRVVVEITGTWRGLPRGRVVRVLERGLKRVVGVFDHKGTFGFVVPDDPKIAYDFYVAPENIDGAKPNQKVIAEILKYPSPGKNPEAKVVKVLGDLDDPSIDLPSVIVKHDLPEPGEFPEEVIREANAIPARVRKKDLVGRKDLRDKVIVTIDGEDAKDFDDAISVEKLPNGNYLLGVHIADVSHYVKEGSALDQEAFKRGTSVYLIDTVIPMLPFRLSNGICSLVEGKDRLTMSVEMEIDRDGRVVRYDVYPSVIKSKKRMIYERVNEFLEDPSSMKEYEPFKDLIYNAVELAEILREARRKRGAILDIESDEVKVILDENGQVVDIVPRKRGIAEKLIEEFMIRANETVAEIFDHAGLPFMYRVHEEPDPETIFQLKNYLEAMGIRAKFSHKIHPGMLQKLLEKVKDHPLRSSVERLLVRSMKRAMYSAVNIGHFGLASYAYTHFTSPIRRYPDLVVHRLLKLYLEQNGYFTPEQIEKFSKVLPKIAKHCSRRERVADEAEWDLVAMKKVEYIARHIGEVFNVVVTNITKFGLFVEIPEKSISGLVHISTLDDYYYYDETRNMLIGKRKGKVFRLGDVLKAKVVRADKIRGEIDFVLVEEDEE.

Residues 246 to 573 (RKDLRDKVIV…VHRLLKLYLE (328 aa)) enclose the RNB domain. One can recognise an S1 motif domain in the interval 625 to 705 (GEVFNVVVTN…IRGEIDFVLV (81 aa)).

The protein belongs to the RNR ribonuclease family. RNase R subfamily.

The protein resides in the cytoplasm. The catalysed reaction is Exonucleolytic cleavage in the 3'- to 5'-direction to yield nucleoside 5'-phosphates.. Its function is as follows. 3'-5' exoribonuclease that releases 5'-nucleoside monophosphates and is involved in maturation of structured RNAs. In Thermotoga maritima (strain ATCC 43589 / DSM 3109 / JCM 10099 / NBRC 100826 / MSB8), this protein is Ribonuclease R.